The primary structure comprises 428 residues: Serine--tRNA ligase (428 aa).

236 to 238 is a binding site for L-serine; it reads TAE. Residue 267 to 269 coordinates ATP; sequence RSE. Glutamate 290 lines the L-serine pocket. ATP is bound at residue 354–357; the sequence is EISS. Residue serine 388 participates in L-serine binding.

It belongs to the class-II aminoacyl-tRNA synthetase family. Type-1 seryl-tRNA synthetase subfamily. Homodimer. The tRNA molecule binds across the dimer.

It localises to the cytoplasm. It catalyses the reaction tRNA(Ser) + L-serine + ATP = L-seryl-tRNA(Ser) + AMP + diphosphate + H(+). The catalysed reaction is tRNA(Sec) + L-serine + ATP = L-seryl-tRNA(Sec) + AMP + diphosphate + H(+). Its pathway is aminoacyl-tRNA biosynthesis; selenocysteinyl-tRNA(Sec) biosynthesis; L-seryl-tRNA(Sec) from L-serine and tRNA(Sec): step 1/1. Its function is as follows. Catalyzes the attachment of serine to tRNA(Ser). Is also able to aminoacylate tRNA(Sec) with serine, to form the misacylated tRNA L-seryl-tRNA(Sec), which will be further converted into selenocysteinyl-tRNA(Sec). The protein is Serine--tRNA ligase of Psychrobacter sp. (strain PRwf-1).